Consider the following 181-residue polypeptide: MDIETANALTAFTARYCDAWHEMNGTWPQSEELYGVPSPCIITTMDDKILWQPQPFSLEQTVNAVERAMDIVVQPAVHAFYTTQFAGDMQARFANETMTLLQTWSENDFQRVQENLIGHLVTQKRLKLAPTLFIATLDSELDVIAVCNLNGEVIKETLGTRKRDVLAPSLADFLNQLEPVL.

This sequence belongs to the Syd family.

It localises to the cell inner membrane. Interacts with the SecY protein in vivo. May bind preferentially to an uncomplexed state of SecY, thus functioning either as a chelating agent for excess SecY in the cell or as a regulatory factor that negatively controls the translocase function. This Enterobacter sp. (strain 638) protein is Protein Syd.